The following is a 140-amino-acid chain: Putative peptidyl-tRNA hydrolase PTRHD1 (140 aa).

This sequence belongs to the PTH2 family. PTRHD1 subfamily.

It carries out the reaction an N-acyl-L-alpha-aminoacyl-tRNA + H2O = an N-acyl-L-amino acid + a tRNA + H(+). In terms of biological role, as a putative peptidyl-tRNA hydrolase, it might be involved in releasing tRNAs from the ribosome during protein synthesis. Some evidence, however, suggests that it lacks peptidyl-tRNA hydrolase activity. The sequence is that of Putative peptidyl-tRNA hydrolase PTRHD1 (PTRHD1) from Homo sapiens (Human).